A 141-amino-acid chain; its full sequence is Protein X (141 aa).

Residues Gly-22 to Asp-52 are disordered. Positions Pro-33 to Ser-48 are enriched in low complexity. The interval Pro-68–Leu-113 is mitochondrial targeting sequence.

Belongs to the orthohepadnavirus protein X family. As to quaternary structure, may form homodimer. May interact with host CEBPA, CFLAR, CREB1, DDB1, E4F1, HBXIP, HSPD1/HSP60, NFKBIA, POLR2E and SMAD4. Interacts with host SMC5-SMC6 complex and induces its degradation. Interacts with host TRPC4AP; leading to prevent ubiquitination of TRPC4AP. Interacts with host PLSCR1; this interaction promotes ubiquitination and degradation of HBx and impairs HBx-mediated cell proliferation. In terms of processing, a fraction may be phosphorylated in insect cells and HepG2 cells, a human hepatoblastoma cell line. Phosphorylated in vitro by host protein kinase C or mitogen-activated protein kinase. N-acetylated in insect cells.

The protein resides in the host cytoplasm. Its subcellular location is the host nucleus. It localises to the host mitochondrion. Multifunctional protein that plays a role in silencing host antiviral defenses and promoting viral transcription. Does not seem to be essential for HBV infection. May be directly involved in development of cirrhosis and liver cancer (hepatocellular carcinoma). Most of cytosolic activities involve modulation of cytosolic calcium. The effect on apoptosis is controversial depending on the cell types in which the studies have been conducted. May induce apoptosis by localizing in mitochondria and causing loss of mitochondrial membrane potential. May also modulate apoptosis by binding host CFLAR, a key regulator of the death-inducing signaling complex (DISC). Promotes viral transcription by using the host E3 ubiquitin ligase DDB1 to target the SMC5-SMC6 complex to proteasomal degradation. This host complex would otherwise bind to viral episomal DNA, and prevents its transcription. Moderately stimulates transcription of many different viral and cellular transcription elements. Promoters and enhancers stimulated by HBx contain DNA binding sites for NF-kappa-B, AP-1, AP-2, c-EBP, ATF/CREB, or the calcium-activated factor NF-AT. In Woodchuck hepatitis B virus (isolate w64/pWS23) (WHV), this protein is Protein X.